The chain runs to 416 residues: Serine hydroxymethyltransferase (416 aa).

(6S)-5,6,7,8-tetrahydrofolate-binding positions include L118 and 122 to 124 (GHL). An N6-(pyridoxal phosphate)lysine modification is found at K226. (6S)-5,6,7,8-tetrahydrofolate is bound by residues E242 and 350–352 (SPF).

It belongs to the SHMT family. As to quaternary structure, homodimer. It depends on pyridoxal 5'-phosphate as a cofactor.

The protein localises to the cytoplasm. It carries out the reaction (6R)-5,10-methylene-5,6,7,8-tetrahydrofolate + glycine + H2O = (6S)-5,6,7,8-tetrahydrofolate + L-serine. The protein operates within one-carbon metabolism; tetrahydrofolate interconversion. Its pathway is amino-acid biosynthesis; glycine biosynthesis; glycine from L-serine: step 1/1. In terms of biological role, catalyzes the reversible interconversion of serine and glycine with tetrahydrofolate (THF) serving as the one-carbon carrier. This reaction serves as the major source of one-carbon groups required for the biosynthesis of purines, thymidylate, methionine, and other important biomolecules. Also exhibits THF-independent aldolase activity toward beta-hydroxyamino acids, producing glycine and aldehydes, via a retro-aldol mechanism. This Helicobacter pylori (strain ATCC 700392 / 26695) (Campylobacter pylori) protein is Serine hydroxymethyltransferase.